The sequence spans 645 residues: Threonine--tRNA ligase (645 aa).

Positions 1–63 constitute a TGS domain; the sequence is MNQINIQFPD…EQDGAIEIIT (63 aa). The tract at residues 242-540 is catalytic; that stretch reads DHRKIGKDLE…LTEETKGAFP (299 aa). Residues C336, H387, and H517 each contribute to the Zn(2+) site.

It belongs to the class-II aminoacyl-tRNA synthetase family. Homodimer. Zn(2+) is required as a cofactor.

The protein localises to the cytoplasm. It carries out the reaction tRNA(Thr) + L-threonine + ATP = L-threonyl-tRNA(Thr) + AMP + diphosphate + H(+). Catalyzes the attachment of threonine to tRNA(Thr) in a two-step reaction: L-threonine is first activated by ATP to form Thr-AMP and then transferred to the acceptor end of tRNA(Thr). Also edits incorrectly charged L-seryl-tRNA(Thr). The polypeptide is Threonine--tRNA ligase (Staphylococcus epidermidis (strain ATCC 35984 / DSM 28319 / BCRC 17069 / CCUG 31568 / BM 3577 / RP62A)).